We begin with the raw amino-acid sequence, 155 residues long: Endoribonuclease YbeY (155 aa).

Residues His120, His124, and His130 each coordinate Zn(2+).

The protein belongs to the endoribonuclease YbeY family. Zn(2+) serves as cofactor.

The protein resides in the cytoplasm. Functionally, single strand-specific metallo-endoribonuclease involved in late-stage 70S ribosome quality control and in maturation of the 3' terminus of the 16S rRNA. The polypeptide is Endoribonuclease YbeY (Staphylococcus aureus (strain MSSA476)).